The following is a 111-amino-acid chain: Photosystem II reaction center Psb28 protein (111 aa).

This sequence belongs to the Psb28 family. As to quaternary structure, part of the photosystem II complex.

The protein resides in the cellular thylakoid membrane. This is Photosystem II reaction center Psb28 protein from Crocosphaera subtropica (strain ATCC 51142 / BH68) (Cyanothece sp. (strain ATCC 51142)).